A 310-amino-acid chain; its full sequence is AMMECR1-like protein (310 aa).

Residues 26–92 (LSGSGTHSHG…SGALSPLPRP (67 aa)) are disordered. Composition is skewed to polar residues over residues 28 to 66 (GSGTHSHGNQSTTVPGSSSGPLQNHQHVDNSSGRENVSD) and 74 to 84 (SPITRMNTASG). Ser-74 is modified (phosphoserine). Residues 97-291 (NSTKNLVVTA…ISYAEYIASR (195 aa)) form the AMMECR1 domain.

This is AMMECR1-like protein (Ammecr1l) from Mus musculus (Mouse).